Reading from the N-terminus, the 132-residue chain is Small ribosomal subunit protein uS11 (132 aa).

Positions Val-113 to Val-132 are disordered.

The protein belongs to the universal ribosomal protein uS11 family. As to quaternary structure, part of the 30S ribosomal subunit.

Functionally, located on the platform of the 30S subunit. The sequence is that of Small ribosomal subunit protein uS11 from Methanocella arvoryzae (strain DSM 22066 / NBRC 105507 / MRE50).